The sequence spans 505 residues: Prenylcysteine oxidase 1 (505 aa).

Positions Met-1–Gly-27 are cleaved as a signal peptide. N-linked (GlcNAc...) asparagine glycans are attached at residues Asn-196, Asn-323, and Asn-353.

This sequence belongs to the prenylcysteine oxidase family. It depends on FAD as a cofactor.

The protein resides in the lysosome. The catalysed reaction is an S-polyprenyl-L-cysteine + O2 + H2O = a polyprenal + L-cysteine + H2O2. The enzyme catalyses S-(2E,6E)-farnesyl-L-cysteine + O2 + H2O = (2E,6E)-farnesal + L-cysteine + H2O2. It carries out the reaction [(2E,6E,10E)-geranylgeranyl]-L-cysteine + O2 + H2O = (2E,6E,10E)-geranylgeranial + L-cysteine + H2O2. In terms of biological role, prenylcysteine oxidase that cleaves the thioether bond of prenyl-L-cysteines, such as farnesylcysteine and geranylgeranylcysteine. Only active against free prenylcysteines and not prenylcysteine residues within prenylated proteins or peptides. Involved in the final step in the degradation of prenylated proteins, by degrading prenylcysteines after the protein has been degraded. This is Prenylcysteine oxidase 1 from Pongo abelii (Sumatran orangutan).